Reading from the N-terminus, the 172-residue chain is MIITVGGLAGTGTTTTAELLSEKLGIPFVSSGSIFRAMAEEKGMSVLEFSEFAESNDNIDKEIDKRQAELAKSSENLILEGRLSAYFVEADLKLWLMAPLDVRAQRISQRESKSVDVAKEEIKIREESEALRYLDIHNIDISNLDIYDLMINTDSFDPESITKIILTTLKVI.

An ATP-binding site is contributed by 7-15 (GLAGTGTTT).

This sequence belongs to the cytidylate kinase family. Type 2 subfamily.

It localises to the cytoplasm. The catalysed reaction is CMP + ATP = CDP + ADP. It catalyses the reaction dCMP + ATP = dCDP + ADP. The sequence is that of Cytidylate kinase from Methanobrevibacter smithii (strain ATCC 35061 / DSM 861 / OCM 144 / PS).